The chain runs to 264 residues: Movement protein (264 aa).

The interval 211-264 is disordered; the sequence is RTKSSKRGPKNNNNLGKGRSGGRPKPKSVDEVEEEFDNLIEDEAETSVADSDSY. Over residues 241–255 the composition is skewed to acidic residues; sequence EVEEEFDNLIEDEAE.

This sequence belongs to the tobamovirus movement protein family. In terms of assembly, binds to host RBCS at the plasmodesmata; this interaction seems required for viral systemic movement. In resistant plants, interacts with host MBP2C at host microtubules; this interaction prevents virus cell to cell movement. In resistant plants, interacts with host resistance (R) protein (e.g. tomato ToMV resistance protein TM-2(2), AC Q71BG9) at the host plasma membrane; this interaction triggers host defense responses leading to programmed cell death.

The protein localises to the host cytoplasm. It localises to the host cytoskeleton. It is found in the host cell junction. Its subcellular location is the host plasmodesma. Transports viral genome to neighboring plant cells directly through plasmosdesmata, without any budding. The movement protein allows efficient cell to cell propagation, by bypassing the host cell wall barrier. Forms a ribonucleoprotein complex with viral RNA. Binds microtubules and modulates microtubule stability. Can bind double-stranded DNA. Triggers host hypersensitive defense reaction in incompatible plants harboring resistance (R) proteins. The sequence is that of Movement protein (MP) from Antirrhinum majus (Garden snapdragon).